We begin with the raw amino-acid sequence, 237 residues long: Ribonuclease PH (237 aa).

Phosphate-binding positions include Arg86 and 124–126 (GTR).

The protein belongs to the RNase PH family. In terms of assembly, homohexameric ring arranged as a trimer of dimers.

It catalyses the reaction tRNA(n+1) + phosphate = tRNA(n) + a ribonucleoside 5'-diphosphate. In terms of biological role, phosphorolytic 3'-5' exoribonuclease that plays an important role in tRNA 3'-end maturation. Removes nucleotide residues following the 3'-CCA terminus of tRNAs; can also add nucleotides to the ends of RNA molecules by using nucleoside diphosphates as substrates, but this may not be physiologically important. Probably plays a role in initiation of 16S rRNA degradation (leading to ribosome degradation) during starvation. In Methylobacterium sp. (strain 4-46), this protein is Ribonuclease PH.